We begin with the raw amino-acid sequence, 43 residues long: Protein PsbN (43 aa).

Residues 7 to 29 (IVIFVSSLLLGITTYSVYTAFGP) traverse the membrane as a helical segment.

The protein belongs to the PsbN family.

Its subcellular location is the plastid. It is found in the chloroplast thylakoid membrane. Its function is as follows. May play a role in photosystem I and II biogenesis. This chain is Protein PsbN, found in Phaeodactylum tricornutum (strain CCAP 1055/1).